A 463-amino-acid chain; its full sequence is Chromosomal replication initiator protein DnaA (463 aa).

A domain I, interacts with DnaA modulators region spans residues M1–T83. Residues T83 to S124 form a domain II region. The tract at residues T125–S343 is domain III, AAA+ region. ATP is bound by residues G171, G173, K174, and T175. Residues N344 to N463 form a domain IV, binds dsDNA region.

Belongs to the DnaA family. In terms of assembly, oligomerizes as a right-handed, spiral filament on DNA at oriC.

The protein localises to the cytoplasm. Its function is as follows. Plays an essential role in the initiation and regulation of chromosomal replication. ATP-DnaA binds to the origin of replication (oriC) to initiate formation of the DNA replication initiation complex once per cell cycle. Binds the DnaA box (a 9 base pair repeat at the origin) and separates the double-stranded (ds)DNA. Forms a right-handed helical filament on oriC DNA; dsDNA binds to the exterior of the filament while single-stranded (ss)DNA is stabiized in the filament's interior. The ATP-DnaA-oriC complex binds and stabilizes one strand of the AT-rich DNA unwinding element (DUE), permitting loading of DNA polymerase. After initiation quickly degrades to an ADP-DnaA complex that is not apt for DNA replication. Binds acidic phospholipids. This Rickettsia canadensis (strain McKiel) protein is Chromosomal replication initiator protein DnaA.